The sequence spans 302 residues: Myb-related protein Hv33 (302 aa).

2 consecutive HTH myb-type domains span residues 11–63 (QPKV…INYL) and 64–118 (RPDL…KKKL). 2 consecutive DNA-binding regions (H-T-H motif) follow at residues 39-63 (WSSVPRLAALNRCGKSCRLRWINYL) and 91-114 (WSQIASHLPGRTDNEIKNFWNSCI). The tract at residues 137 to 158 (ATAAAALPDAEEEDRKPLCPAV) is disordered.

In terms of tissue distribution, germinating seed and apical meristem of shoot and root.

The protein resides in the nucleus. Its function is as follows. Possible transcription activator in response to an external signal. May be involved in the regulation of flavonoid biosynthesis. This chain is Myb-related protein Hv33 (MYB2), found in Hordeum vulgare (Barley).